A 204-amino-acid chain; its full sequence is LexA repressor (204 aa).

Positions 29-49 form a DNA-binding region, H-T-H motif; that stretch reads RAEIADIMGFQSKNAASDHLR. Catalysis depends on for autocatalytic cleavage activity residues Ser123 and Lys160.

It belongs to the peptidase S24 family. In terms of assembly, homodimer.

The catalysed reaction is Hydrolysis of Ala-|-Gly bond in repressor LexA.. Represses a number of genes involved in the response to DNA damage (SOS response), including recA and lexA. In the presence of single-stranded DNA, RecA interacts with LexA causing an autocatalytic cleavage which disrupts the DNA-binding part of LexA, leading to derepression of the SOS regulon and eventually DNA repair. The protein is LexA repressor of Alcanivorax borkumensis (strain ATCC 700651 / DSM 11573 / NCIMB 13689 / SK2).